We begin with the raw amino-acid sequence, 162 residues long: MLNQLENLTERVGGSNKLVDRWLDVRKHLLVAYYNLVGIKPGKESYMRLNEKALDDFCQSLVDYLSAGHFSIYERILHKLEGNGQLLHAAKIWPLLEDNTQRIMDYYDTSLETAIDHDNRLEFQQALSDIGEALEARFVLEDKLIMLVFDAMHDGARVKRPA.

It belongs to the Rsd/AlgQ family. Interacts with RpoD.

It is found in the cytoplasm. Its function is as follows. Binds RpoD and negatively regulates RpoD-mediated transcription activation by preventing the interaction between the primary sigma factor RpoD with the catalytic core of the RNA polymerase and with promoter DNA. May be involved in replacement of the RNA polymerase sigma subunit from RpoD to RpoS during the transition from exponential growth to the stationary phase. This is Regulator of sigma D from Salmonella paratyphi A (strain ATCC 9150 / SARB42).